We begin with the raw amino-acid sequence, 207 residues long: Cytochrome bo(3) ubiquinol oxidase subunit 3 (207 aa).

The Cytoplasmic portion of the chain corresponds to 1 to 26 (MSSQVMHGAAHGHDHGHDDHHHDSGQ). The chain crosses the membrane as a helical span at residues 27–47 (MTVLGFWLYLMTDCILFASLF). Topologically, residues 48 to 70 (ATYAVLSGSFAGGPSGHDIFQLD) are periplasmic. The chain crosses the membrane as a helical span at residues 71–91 (FVAVETLFLLLSSITFGFAML). The Cytoplasmic portion of the chain corresponds to 92–99 (KMFDGKKA). A helical membrane pass occupies residues 100-120 (GVLGWLAVTFLFGAGFIAMEI). Residues 121 to 141 (YEFHHLIAEGFGPQRSGFLSG) are Periplasmic-facing. Residues 142-162 (FFALVGTHGLHVTAGLIWMAI) traverse the membrane as a helical segment. The Cytoplasmic segment spans residues 163–185 (MMYQINKHGITPTAKTRMSCLSL). Residues 186–206 (FWHFLDVVWICVFTVVYLLGV) form a helical membrane-spanning segment. Residue L207 is a topological domain, periplasmic.

This sequence belongs to the cytochrome c oxidase subunit 3 family. As to quaternary structure, heterooctamer of two A chains, two B chains, two C chains and two D chains.

It localises to the cell inner membrane. Functionally, cytochrome bo(3) ubiquinol terminal oxidase is the component of the aerobic respiratory chain of E.coli that predominates when cells are grown at high aeration. Has proton pump activity across the membrane in addition to electron transfer, pumping 2 protons/electron. The protein is Cytochrome bo(3) ubiquinol oxidase subunit 3 (cyoC) of Pseudomonas putida (Arthrobacter siderocapsulatus).